We begin with the raw amino-acid sequence, 555 residues long: MRGLATTLLIGAAAAATYPAQQVLKAPEEVLEKTHKTSSSSLAETLARPLHELNEELKSLTAEAEEVWEQVSNMFPGALDNIPFFSSPKKHTRRPDSHWDHIVRGADVQNIWVENENGEKEREVGGRLETFDLRVKAVDPSSLGIDPDVKQYSGYLDDNENDKHLFYWFFESRNDPKNDPVVLWLNGGPGCSSLTGLFFELGPSSIGKNIKPIYNPYSWNSNASVIFLDQPVNVGFSYSGNSVSETSAAAKDVYALLTLFFKQFPEYATQDFHIAGESYAGHYIPSFASEILSHKKRNINLKSVLIGNGLTDGFTQYEYYRPMACGDGGYPAVLDESACRSMDNALGRCQSMIQSCYDSESAWTCVPASIYCNNALLGPYQRTGQNVYDIRKPCEGSSLCYADLEYISTYLNQAEVLKAVGAEVDSFDSCNFDINRNFLFKGDWMKPFHKLVPGILEEIPVLIYAGDADFICNWLGNKAWSDALEWSGHEEYAATELEDLEIVDNEHKGKKIGQVKSSGNLTFMRLFGGGHMVPYDQPEASLEFFNRWIGGEWTK.

Positions 1 to 17 are cleaved as a signal peptide; it reads MRGLATTLLIGAAAAAT. Residues 18 to 136 constitute a propeptide that is removed on maturation; that stretch reads YPAQQVLKAP…RLETFDLRVK (119 aa). 5 disulfides stabilise this stretch: C191-C430, C325-C339, C349-C372, C356-C365, and C394-C400. An N-linked (GlcNAc...) asparagine glycan is attached at N222. S278 is a catalytic residue. D469 is an active-site residue. N-linked (GlcNAc...) asparagine glycosylation occurs at N520. H531 is an active-site residue.

Belongs to the peptidase S10 family.

Its subcellular location is the vacuole. The enzyme catalyses Release of a C-terminal amino acid with broad specificity.. In terms of biological role, vacuolar carboxypeptidase involved in degradation of small peptides. Digests preferentially peptides containing an aliphatic or hydrophobic residue in P1' position, as well as methionine, leucine or phenylalanine in P1 position of ester substrate. This is Carboxypeptidase Y homolog A (cpyA) from Talaromyces marneffei (strain ATCC 18224 / CBS 334.59 / QM 7333) (Penicillium marneffei).